The primary structure comprises 484 residues: Replication factor C large subunit (484 aa).

46-53 provides a ligand contact to ATP; sequence GPPGSGKT. Basic and acidic residues-rich tracts occupy residues 419 to 432, 442 to 451, and 459 to 478; these read VKTE…KTKE, RISEPPEPLK, and KSVE…KKQA. Residues 419-484 form a disordered region; that stretch reads VKTETPKKKE…KKQATLDSFF (66 aa).

The protein belongs to the activator 1 small subunits family. RfcL subfamily. Heteromultimer composed of small subunits (RfcS) and large subunits (RfcL).

Functionally, part of the RFC clamp loader complex which loads the PCNA sliding clamp onto DNA. The polypeptide is Replication factor C large subunit (Methanococcus maripaludis (strain C5 / ATCC BAA-1333)).